A 170-amino-acid chain; its full sequence is Large ribosomal subunit protein uL5 (170 aa).

The protein belongs to the universal ribosomal protein uL5 family. As to quaternary structure, part of the 50S ribosomal subunit; contacts the 5S rRNA and probably tRNA. Forms a bridge to the 30S subunit in the 70S ribosome.

Functionally, this is one of the proteins that bind and probably mediate the attachment of the 5S RNA into the large ribosomal subunit, where it forms part of the central protuberance. In the 70S ribosome it contacts protein S13 of the 30S subunit (bridge B1b), connecting the 2 subunits; this bridge is implicated in subunit movement. May contact the P site tRNA; the 5S rRNA and some of its associated proteins might help stabilize positioning of ribosome-bound tRNAs. The chain is Large ribosomal subunit protein uL5 from Thermoplasma volcanium (strain ATCC 51530 / DSM 4299 / JCM 9571 / NBRC 15438 / GSS1).